The sequence spans 231 residues: 2-C-methyl-D-erythritol 4-phosphate cytidylyltransferase (231 aa).

It belongs to the IspD/TarI cytidylyltransferase family. IspD subfamily.

It carries out the reaction 2-C-methyl-D-erythritol 4-phosphate + CTP + H(+) = 4-CDP-2-C-methyl-D-erythritol + diphosphate. It functions in the pathway isoprenoid biosynthesis; isopentenyl diphosphate biosynthesis via DXP pathway; isopentenyl diphosphate from 1-deoxy-D-xylulose 5-phosphate: step 2/6. In terms of biological role, catalyzes the formation of 4-diphosphocytidyl-2-C-methyl-D-erythritol from CTP and 2-C-methyl-D-erythritol 4-phosphate (MEP). The protein is 2-C-methyl-D-erythritol 4-phosphate cytidylyltransferase of Bacillus licheniformis (strain ATCC 14580 / DSM 13 / JCM 2505 / CCUG 7422 / NBRC 12200 / NCIMB 9375 / NCTC 10341 / NRRL NRS-1264 / Gibson 46).